Reading from the N-terminus, the 244-residue chain is Cell division protein ZapD (244 aa).

This sequence belongs to the ZapD family. Interacts with FtsZ.

The protein localises to the cytoplasm. In terms of biological role, cell division factor that enhances FtsZ-ring assembly. Directly interacts with FtsZ and promotes bundling of FtsZ protofilaments, with a reduction in FtsZ GTPase activity. In Shewanella sp. (strain MR-4), this protein is Cell division protein ZapD.